The chain runs to 97 residues: U6-theraphotoxin-Hhn1a 3 (97 aa).

An N-terminal signal peptide occupies residues 1-33; sequence MLIKQFSRRSKNTKVQILLAFAALFVLAVGSYA. Positions 34-61 are excised as a propeptide; that stretch reads SESKKLDLRDALFSAMFSADYQLNPQER. 3 disulfides stabilise this stretch: Cys-63-Cys-77, Cys-70-Cys-82, and Cys-76-Cys-89.

The protein belongs to the neurotoxin 10 (Hwtx-1) family. 12 (Hntx-12) subfamily. Expressed by the venom gland.

It is found in the secreted. Its function is as follows. Ion channel inhibitor. The protein is U6-theraphotoxin-Hhn1a 3 of Cyriopagopus hainanus (Chinese bird spider).